The following is a 47-amino-acid chain: Accessory gland peptide Acp33A (47 aa).

The N-terminal stretch at 1–21 is a signal peptide; the sequence is MLPSKRVPFLFTIILFLAGLG.

Main cells of accessory gland and seminal fluid.

It localises to the secreted. In terms of biological role, responsible for physiological and behavioral changes in mated female flies. This is Accessory gland peptide Acp33A (Acp33A) from Drosophila melanogaster (Fruit fly).